Reading from the N-terminus, the 477-residue chain is ATP synthase subunit beta (477 aa).

148-155 (GGAGVGKT) lines the ATP pocket.

Belongs to the ATPase alpha/beta chains family. In terms of assembly, F-type ATPases have 2 components, CF(1) - the catalytic core - and CF(0) - the membrane proton channel. CF(1) has five subunits: alpha(3), beta(3), gamma(1), delta(1), epsilon(1). CF(0) has three main subunits: a(1), b(2) and c(9-12). The alpha and beta chains form an alternating ring which encloses part of the gamma chain. CF(1) is attached to CF(0) by a central stalk formed by the gamma and epsilon chains, while a peripheral stalk is formed by the delta and b chains.

The protein localises to the cell inner membrane. The catalysed reaction is ATP + H2O + 4 H(+)(in) = ADP + phosphate + 5 H(+)(out). Its function is as follows. Produces ATP from ADP in the presence of a proton gradient across the membrane. The catalytic sites are hosted primarily by the beta subunits. The polypeptide is ATP synthase subunit beta (Psychrobacter cryohalolentis (strain ATCC BAA-1226 / DSM 17306 / VKM B-2378 / K5)).